The following is a 459-amino-acid chain: ATP synthase subunit beta (459 aa).

ATP is bound at residue glycine 148–threonine 155.

Belongs to the ATPase alpha/beta chains family. In terms of assembly, F-type ATPases have 2 components, CF(1) - the catalytic core - and CF(0) - the membrane proton channel. CF(1) has five subunits: alpha(3), beta(3), gamma(1), delta(1), epsilon(1). CF(0) has three main subunits: a(1), b(2) and c(9-12). The alpha and beta chains form an alternating ring which encloses part of the gamma chain. CF(1) is attached to CF(0) by a central stalk formed by the gamma and epsilon chains, while a peripheral stalk is formed by the delta and b chains.

Its subcellular location is the cell inner membrane. It carries out the reaction ATP + H2O + 4 H(+)(in) = ADP + phosphate + 5 H(+)(out). Functionally, produces ATP from ADP in the presence of a proton gradient across the membrane. The catalytic sites are hosted primarily by the beta subunits. This chain is ATP synthase subunit beta, found in Cellvibrio japonicus (strain Ueda107) (Pseudomonas fluorescens subsp. cellulosa).